Reading from the N-terminus, the 1198-residue chain is Tetratricopeptide repeat protein 17 (1198 aa).

One copy of the TPR 1 repeat lies at 295 to 328; sequence FTSYYTLGNIYAMLGEYNHSVLCYDHALQAKPGF. Residues 340–382 adopt a coiled-coil conformation; it reads CQQKLEQKLEAQHRSLQRTLNELKEYQKQHDHYLRQQEILEKH. 2 TPR repeats span residues 619-652 and 689-722; these read WLILNEAGLYWRAVGNSTFAIACLQRALNLAPVQ and PLTFLSLGNAYLALKNVSGALEAFRQALKLTTRC. 2 disordered regions span residues 771–825 and 903–924; these read PQSL…KSEE and KKPKGDHKKPPGKKVEASQAEN. Positions 903 to 914 are enriched in basic residues; the sequence is KKPKGDHKKPPG. TPR repeat units lie at residues 1071–1105, 1108–1141, and 1142–1175; these read SWVLSSMAALYWRVKGQGKKAIDCLRQALHYAPHQ, DVPLISLANILHNAKLWNDAVVVATMAVEIAPHF, and AVNHFTLGNVYVAMEEFEKALVWYESTLKLQPEF.

The protein belongs to the TTC17 family. Interacts with CATIP. In terms of tissue distribution, expressed in germ cells as well as in somatic cells of the testis (at protein level). Ubiquitous.

Its subcellular location is the cytoplasm. It is found in the cell membrane. The protein localises to the cytoskeleton. Its function is as follows. Plays a role in primary ciliogenesis by modulating actin polymerization. This chain is Tetratricopeptide repeat protein 17 (Ttc17), found in Rattus norvegicus (Rat).